The primary structure comprises 166 residues: NAD(P)H-quinone oxidoreductase subunit I, chloroplastic (166 aa).

4Fe-4S ferredoxin-type domains follow at residues 55–84 (GRIH…VDWK) and 95–124 (LNYS…MTEE). 8 residues coordinate [4Fe-4S] cluster: cysteine 64, cysteine 67, cysteine 70, cysteine 74, cysteine 104, cysteine 107, cysteine 110, and cysteine 114.

Belongs to the complex I 23 kDa subunit family. In terms of assembly, NDH is composed of at least 16 different subunits, 5 of which are encoded in the nucleus. The cofactor is [4Fe-4S] cluster.

The protein resides in the plastid. It is found in the chloroplast thylakoid membrane. It catalyses the reaction a plastoquinone + NADH + (n+1) H(+)(in) = a plastoquinol + NAD(+) + n H(+)(out). The catalysed reaction is a plastoquinone + NADPH + (n+1) H(+)(in) = a plastoquinol + NADP(+) + n H(+)(out). In terms of biological role, NDH shuttles electrons from NAD(P)H:plastoquinone, via FMN and iron-sulfur (Fe-S) centers, to quinones in the photosynthetic chain and possibly in a chloroplast respiratory chain. The immediate electron acceptor for the enzyme in this species is believed to be plastoquinone. Couples the redox reaction to proton translocation, and thus conserves the redox energy in a proton gradient. This Pericome caudata (Mountain tail-leaf) protein is NAD(P)H-quinone oxidoreductase subunit I, chloroplastic.